A 114-amino-acid chain; its full sequence is Large ribosomal subunit protein bL19 (114 aa).

It belongs to the bacterial ribosomal protein bL19 family.

In terms of biological role, this protein is located at the 30S-50S ribosomal subunit interface and may play a role in the structure and function of the aminoacyl-tRNA binding site. The sequence is that of Large ribosomal subunit protein bL19 from Clavibacter sepedonicus (Clavibacter michiganensis subsp. sepedonicus).